We begin with the raw amino-acid sequence, 337 residues long: Undecaprenyl-phosphate 4-deoxy-4-formamido-L-arabinose transferase (337 aa).

A run of 2 helical transmembrane segments spans residues 235-255 (LSIIGFSMALLGVLFAALLII) and 270-290 (FVLFAVLFVFTGGQFIGMGLL).

Belongs to the glycosyltransferase 2 family.

The protein localises to the cell inner membrane. It catalyses the reaction UDP-4-deoxy-4-formamido-beta-L-arabinose + di-trans,octa-cis-undecaprenyl phosphate = 4-deoxy-4-formamido-alpha-L-arabinopyranosyl di-trans,octa-cis-undecaprenyl phosphate + UDP. Its pathway is glycolipid biosynthesis; 4-amino-4-deoxy-alpha-L-arabinose undecaprenyl phosphate biosynthesis; 4-amino-4-deoxy-alpha-L-arabinose undecaprenyl phosphate from UDP-4-deoxy-4-formamido-beta-L-arabinose and undecaprenyl phosphate: step 1/2. It functions in the pathway bacterial outer membrane biogenesis; lipopolysaccharide biosynthesis. Functionally, catalyzes the transfer of 4-deoxy-4-formamido-L-arabinose from UDP to undecaprenyl phosphate. The modified arabinose is attached to lipid A and is required for resistance to polymyxin and cationic antimicrobial peptides. The polypeptide is Undecaprenyl-phosphate 4-deoxy-4-formamido-L-arabinose transferase (Pseudomonas savastanoi pv. phaseolicola (strain 1448A / Race 6) (Pseudomonas syringae pv. phaseolicola (strain 1448A / Race 6))).